A 592-amino-acid chain; its full sequence is MMENNRNYFVAIALSVLILVAWQYFYVNPRMDKDRIAAEKAQQTQQVQPQQGGQQPAPGQALPGGAVPGESRDQAVAKSARVAIDTPALSGSINLTGARFDDLKLKGYHETVDPKSPVITLFSPAETADGYFTEIGYIGNDASGSVPGPQTVWTLSGGEKLTPATPVTLTYTNDKGITFARTISIDENYMFQVVDSIKNDGSAPVSLSSYGRVTRFNKPTTPSIYVLHEGFIGVAGGSLQEVGYSKIEENLPVEPGKTTGGWHGITDKYWAAAIVPPQETPFDIRFSHFTDGRPRFQSDYKGDAVTVAPGQSAEVKNLVFAGAKEVQVVDTYTTAYAIPKFEKLIDWGWFWFITQPMFKMMDFFFRLFGNFGVAILVTTIVVKLIFFPLANKQYASMANMKKVQPKMEELKKKFGDDRMGLQQAMMQLYKDEKINPLAGCWPILIQIPVFFALYKVIYITIEMRHAPFFGWIRDLSAPDPTTIVNLFGLLPFDGPAFLHLGIWPIIMGVTMFLQMRMNPTPPDPTQAMLFTWMPLVFTFMLASFPAGLVIYWAWNNTLSITQQSIIMKRQGVKIELFDNLKGLFTKRPKPAE.

The chain crosses the membrane as a helical span at residues Asn7–Val27. The tract at residues Ala38–Gln74 is disordered. Residues Ala41–Gly69 are compositionally biased toward low complexity. 4 helical membrane passes run Leu367 to Phe387, Trp441 to Ile461, Leu486 to Ile506, and Phe530 to Ile550.

Belongs to the OXA1/ALB3/YidC family. Type 1 subfamily. As to quaternary structure, interacts with the Sec translocase complex via SecD. Specifically interacts with transmembrane segments of nascent integral membrane proteins during membrane integration.

It localises to the cell inner membrane. Required for the insertion and/or proper folding and/or complex formation of integral membrane proteins into the membrane. Involved in integration of membrane proteins that insert both dependently and independently of the Sec translocase complex, as well as at least some lipoproteins. Aids folding of multispanning membrane proteins. The sequence is that of Membrane protein insertase YidC from Sinorhizobium fredii (strain NBRC 101917 / NGR234).